We begin with the raw amino-acid sequence, 616 residues long: MPAYRSRTTTHGRNMAGARGLWRATGMKDADFGKPIIAVVNSFTQFVPGHVHLKDLGQLVAREIEQAGGVAKEFNTIAVDDGIAMGHDGMLYSLPSRELIADSVEYMANAHCADGLVCISNCDKITPGMLMAALRLNIPAVFVSGGPMEAGKVKLQGKTKAVDLIDAMVAAADSKVSDEDVKVIERSACPTCGSCSGMFTANSMNCLTEALGLALPGNGSVVATHADRKRLFVEAGHTIVDLVRRYYEQDDASVLPRNVANFKAFENAMTLDIAMGGSTNTVLHLLAAAHEGQVAFTMKDIDRLSRRVPVLCKVAPSVADVHVEDVHRAGGIMGILGELDRAGLIDTSVSTVHAPTMADALERWDIKRSKSEAVRTFYRASPGGIPTQVAFSQERRYDELDADREKGVVRDLEHAFSKDGGLAVLYGNLAQDGCIVKTAGVDASILKFSGPARVFESQDAAVEGILGGKVVAGEVVVIIYEGPRGGPGMQEMLYPTSYLKSMGLGKACALVTDGRFSGGSSGLSIGHLSPEAAEGGNIGLVRTGDLIAIDIPNRSITLEVSDEELAKRRASEEAKGDAAWQATGRKRNVSTALQAYAALTTSAARGAVREVKRRSN.

Position 81 (D81) interacts with Mg(2+). [2Fe-2S] cluster is bound at residue C122. 2 residues coordinate Mg(2+): D123 and K124. Position 124 is an N6-carboxylysine (K124). [2Fe-2S] cluster is bound at residue C195. E491 is a binding site for Mg(2+). S517 (proton acceptor) is an active-site residue.

It belongs to the IlvD/Edd family. Homodimer. The cofactor is [2Fe-2S] cluster. Mg(2+) is required as a cofactor.

It catalyses the reaction (2R)-2,3-dihydroxy-3-methylbutanoate = 3-methyl-2-oxobutanoate + H2O. The catalysed reaction is (2R,3R)-2,3-dihydroxy-3-methylpentanoate = (S)-3-methyl-2-oxopentanoate + H2O. It participates in amino-acid biosynthesis; L-isoleucine biosynthesis; L-isoleucine from 2-oxobutanoate: step 3/4. It functions in the pathway amino-acid biosynthesis; L-valine biosynthesis; L-valine from pyruvate: step 3/4. In terms of biological role, functions in the biosynthesis of branched-chain amino acids. Catalyzes the dehydration of (2R,3R)-2,3-dihydroxy-3-methylpentanoate (2,3-dihydroxy-3-methylvalerate) into 2-oxo-3-methylpentanoate (2-oxo-3-methylvalerate) and of (2R)-2,3-dihydroxy-3-methylbutanoate (2,3-dihydroxyisovalerate) into 2-oxo-3-methylbutanoate (2-oxoisovalerate), the penultimate precursor to L-isoleucine and L-valine, respectively. This is Dihydroxy-acid dehydratase 1 from Bradyrhizobium diazoefficiens (strain JCM 10833 / BCRC 13528 / IAM 13628 / NBRC 14792 / USDA 110).